The following is a 208-amino-acid chain: Probable GTP-binding protein EngB (208 aa).

Positions 23–205 (LTSEMVILGR…RQTLLKYLLT (183 aa)) constitute an EngB-type G domain. Residues 31 to 38 (GRSNVGKS), 57 to 61 (GKTRL), 84 to 87 (DLPG), 154 to 157 (TKFD), and 182 to 184 (FNA) each bind GTP. 2 residues coordinate Mg(2+): S38 and T59.

This sequence belongs to the TRAFAC class TrmE-Era-EngA-EngB-Septin-like GTPase superfamily. EngB GTPase family. The cofactor is Mg(2+).

Necessary for normal cell division and for the maintenance of normal septation. The chain is Probable GTP-binding protein EngB from Helicobacter pylori (strain J99 / ATCC 700824) (Campylobacter pylori J99).